The sequence spans 244 residues: Probable ABC transporter ATP-binding protein p29 (244 aa).

Residues 6 to 241 (LVFDQVSLRY…KLTKQKLMQI (236 aa)) form the ABC transporter domain. Residue 38 to 45 (GKSGVGKT) participates in ATP binding.

The protein belongs to the ABC transporter superfamily.

Part of a high-affinity transport system. The chain is Probable ABC transporter ATP-binding protein p29 (p29) from Mycoplasma pneumoniae (strain ATCC 29342 / M129 / Subtype 1) (Mycoplasmoides pneumoniae).